The following is a 520-amino-acid chain: Sensory neuron membrane protein 1 (520 aa).

The Cytoplasmic segment spans residues 1-5 (MKPKK). Residues 6 to 26 (LGIIGGSLLAFGILICAIAFP) traverse the membrane as a helical segment. The Extracellular portion of the chain corresponds to 27-451 (PFLRSQVKKQ…KLKTVFKTIS (425 aa)). Residues Asn-64, Asn-224, and Asn-268 are each glycosylated (N-linked (GlcNAc...) asparagine). Cystine bridges form between Cys-264-Cys-329, Cys-293-Cys-348, and Cys-331-Cys-337. The helical transmembrane segment at 452–472 (IVGFMKWFTIVSGTCVSGAAA) threads the bilayer. Over 473 to 520 (ALFFKNKDKNKLDITKVTPQKGEEKKWPNQMTISTIQSAAVPPNLDAD) the chain is Cytoplasmic.

Belongs to the CD36 family.

The protein localises to the cell membrane. Plays an olfactory role that is not restricted to pheromone sensitivity. The chain is Sensory neuron membrane protein 1 from Apis mellifera (Honeybee).